The sequence spans 127 residues: MSTISKEDVIKFIENMTVLELSELVKELEERFGVSAAAPVAMAAMPAGAAEAAPVAEQTEFSVVITGVGDKKIQVIKEVRAITNLGLKEAKDLVEKVPGVVKEAIPKDEAEAIAKQLTEAGATVEIK.

It belongs to the bacterial ribosomal protein bL12 family. In terms of assembly, homodimer. Part of the ribosomal stalk of the 50S ribosomal subunit. Forms a multimeric L10(L12)X complex, where L10 forms an elongated spine to which 2 to 4 L12 dimers bind in a sequential fashion. Binds GTP-bound translation factors.

Functionally, forms part of the ribosomal stalk which helps the ribosome interact with GTP-bound translation factors. Is thus essential for accurate translation. In Syntrophobacter fumaroxidans (strain DSM 10017 / MPOB), this protein is Large ribosomal subunit protein bL12.